A 105-amino-acid chain; its full sequence is Integration host factor subunit beta (105 aa).

The protein belongs to the bacterial histone-like protein family. Heterodimer of an alpha and a beta chain.

This protein is one of the two subunits of integration host factor, a specific DNA-binding protein that functions in genetic recombination as well as in transcriptional and translational control. This chain is Integration host factor subunit beta, found in Bradyrhizobium sp. (strain ORS 278).